A 1435-amino-acid chain; its full sequence is Putative ATP-dependent RNA helicase YLR419W (1435 aa).

Disordered regions lie at residues 1-57 (MAKK…STAS) and 226-251 (LSSH…KNSH). Position 9 is a phosphoserine (S9). The span at 31–43 (KGQEPEPEDDKRA) shows a compositional bias: basic and acidic residues. Polar residues predominate over residues 45–57 (QQSNRAKVTSTAS). The region spanning 365 to 406 (PLSTRMIVERLTEIGVSSDEALLALQQNDMNENEAAGFLTRE) is the UBA domain. The RWD domain maps to 430–531 (QELESLESIY…EWLKENISKI (102 aa)). The tract at residues 543–566 (DSKGAINKRNISNGKRSINNSSSR) is disordered. Polar residues predominate over residues 551–566 (RNISNGKRSINNSSSR). The Helicase ATP-binding domain maps to 614 to 782 (IDIINKNEVV…FPGLATCHIE (169 aa)). 627 to 634 (GETGSGKS) contacts ATP. A DEAH box motif is present at residues 729–732 (DEVH). S816 bears the Phosphoserine mark. The Helicase C-terminal domain occupies 845–1020 (LLCQVVEYVH…SLYLSVKAMG (176 aa)).

It belongs to the DEAD box helicase family. DEAH subfamily.

The protein localises to the cytoplasm. It carries out the reaction ATP + H2O = ADP + phosphate + H(+). Its function is as follows. Probable ATP-binding RNA helicase. This chain is Putative ATP-dependent RNA helicase YLR419W, found in Saccharomyces cerevisiae (strain ATCC 204508 / S288c) (Baker's yeast).